The sequence spans 248 residues: Anamorsin homolog (248 aa).

Residues 4 to 130 are N-terminal SAM-like domain; the sequence is FKGLQKSLYI…ETGSSARLSF (127 aa). The segment at 131–161 is linker; sequence AKKSPSMNVWKISGDDEELIDEEELLDEEDK. 4 residues coordinate [2Fe-2S] cluster: Cys172, Cys181, Cys184, and Cys186. A fe-S binding site A region spans residues 172-186; that stretch reads CSTTGKRKACKNCSC. Cys209, Cys212, Cys220, and Cys223 together coordinate [4Fe-4S] cluster. Short sequence motifs (cx2C motif) lie at residues 209-212 and 220-223; these read CGNC and CSTC. A fe-S binding site B region spans residues 209-223; sequence CGNCYLGDAFRCSTC.

It belongs to the anamorsin family. As to quaternary structure, monomer. It depends on [2Fe-2S] cluster as a cofactor. [4Fe-4S] cluster serves as cofactor.

It localises to the cytoplasm. It is found in the mitochondrion intermembrane space. Its function is as follows. Component of the cytosolic iron-sulfur (Fe-S) protein assembly (CIA) machinery. Required for the maturation of extramitochondrial Fe-S proteins. Part of an electron transfer chain functioning in an early step of cytosolic Fe-S biogenesis, facilitating the de novo assembly of a [4Fe-4S] cluster on the cytosolic Fe-S scaffold complex. Electrons are transferred from NADPH via a FAD- and FMN-containing diflavin oxidoreductase. Together with the diflavin oxidoreductase, also required for the assembly of the diferric tyrosyl radical cofactor of ribonucleotide reductase (RNR), probably by providing electrons for reduction during radical cofactor maturation in the catalytic small subunit. This is Anamorsin homolog from Drosophila mojavensis (Fruit fly).